A 780-amino-acid polypeptide reads, in one-letter code: Carboxysome assembly protein CsoS2 (780 aa).

Positions 1 to 15 (MARLSSRELALERRK) are enriched in basic and acidic residues. Disordered regions lie at residues 1 to 173 (MARL…RAIE), 189 to 212 (KHGK…NPDL), 226 to 281 (TKAG…NRSV), 330 to 349 (NRVT…DEPG), and 382 to 444 (SLTQ…TGVT). An N-repeat 1 repeat occupies 5 to 24 (SSRELALERRKALTTSGKKS). The span at 48–78 (AAAAVEPTAPAVSAPVKPTVSFTPASPSSSS) shows a compositional bias: low complexity. Residues 86–105 (PSRDLVLARRDALSRRGKTA) form an N-repeat 2 repeat. Positions 86-116 (PSRDLVLARRDALSRRGKTADTSRDRNRADV) are enriched in basic and acidic residues. Over residues 117–130 (ARQTQAAAPVAASA) the composition is skewed to low complexity. N-repeat repeat units lie at residues 175-194 (PSRA…GKTA) and 213-235 (TSRE…NKQS). M-repeat repeat units lie at residues 260 to 309 (KVGE…QTFC), 320 to 369 (KVRV…AAYC), 378 to 417 (KVGH…GDQY), 431 to 480 (KVGQ…NAFC), 490 to 535 (KVGF…LENA), and 541 to 599 (TSAV…ATAC). The middle region stretch occupies residues 260–608 (KVGESTTSTG…CGNEAPAGTD (349 aa)). Residues 264–276 (STTSTGQTVTGTQ) show a composition bias toward low complexity. 2 stretches are compositionally biased toward low complexity: residues 387 to 403 (GRPV…SVTG) and 432 to 444 (VGQS…TGVT). The segment at 609–749 (SHGQAPEGAA…ATVPHERKRN (141 aa)) is C-terminal domain. C-repeat repeat units lie at residues 623-669 (SVMS…TEQF) and 693-726 (EQPA…EGVS). Disordered regions lie at residues 631 to 661 (AQQQ…LAGG) and 686 to 780 (AVVS…GARG). Positions 641–651 (VTGTSYEQGNR) are enriched in polar residues. The segment covering 709–720 (TGDDWDRGEHVT) has biased composition (basic and acidic residues). The tract at residues 750-780 (EENEWPVSRVTGSSGNTEKGSLITVSGGARG) is C-terminal peptide. A compositionally biased stretch (polar residues) spans 759-768 (VTGSSGNTEK).

The protein belongs to the CsoS2 family. In terms of assembly, interacts via its N-terminal repeats with RuBisCO. Interacts with the major shell protein CsoS1. Unlike H.neapolitanus and predictions for P.marinus strain MIT 9313, this protein is not thought to have ribosomal frameshifting.

Functionally, required for alpha-carboxysome (Cb) assembly, mediates interaction between RuBisCO and the carboxysome shell. The protein is probably intrinsically disordered. The C-terminal repeats act as the encapsulation signal to target proteins to the Cb; they are necessary and sufficient to target both CsoS2 and foreign proteins to the Cb. The N-terminal repeats of this protein bind simultaneously to both subunits of RuBisCO. Probably also interacts with the major shell proteins (CsoS1); that interaction would increase the local concentration of CsoS2 so that it can condense RuBisCO and full carboxysomes can be formed. The sequence is that of Carboxysome assembly protein CsoS2 from Parasynechococcus marenigrum (strain WH8102).